The primary structure comprises 571 residues: Urease subunit alpha (571 aa).

The Urease domain occupies 129 to 571 (GGIDSHIHFI…LPMAQRYFLF (443 aa)). Positions 134, 136, and 217 each coordinate Ni(2+). Position 217 is an N6-carboxylysine (Lys-217). A substrate-binding site is contributed by His-219. 2 residues coordinate Ni(2+): His-246 and His-272. The active-site Proton donor is His-320. Asp-360 contributes to the Ni(2+) binding site.

Belongs to the metallo-dependent hydrolases superfamily. Urease alpha subunit family. Heterotrimer of UreA (gamma), UreB (beta) and UreC (alpha) subunits. Three heterotrimers associate to form the active enzyme. Ni cation is required as a cofactor. Post-translationally, carboxylation allows a single lysine to coordinate two nickel ions.

It is found in the cytoplasm. It carries out the reaction urea + 2 H2O + H(+) = hydrogencarbonate + 2 NH4(+). It participates in nitrogen metabolism; urea degradation; CO(2) and NH(3) from urea (urease route): step 1/1. The protein is Urease subunit alpha of Cupriavidus necator (strain ATCC 17699 / DSM 428 / KCTC 22496 / NCIMB 10442 / H16 / Stanier 337) (Ralstonia eutropha).